We begin with the raw amino-acid sequence, 404 residues long: Formate-dependent phosphoribosylglycinamide formyltransferase (404 aa).

Residues 27 to 28 and glutamate 87 each bind N(1)-(5-phospho-beta-D-ribosyl)glycinamide; that span reads EL. Residues arginine 120, lysine 162, 167-172, 202-205, and glutamate 210 contribute to the ATP site; these read SSGKGQ and EGFI. The region spanning 125 to 320 is the ATP-grasp domain; the sequence is RLAAETLGLP…EFELHARALL (196 aa). 2 residues coordinate Mg(2+): glutamate 279 and glutamate 291. N(1)-(5-phospho-beta-D-ribosyl)glycinamide is bound by residues aspartate 298, lysine 367, and 374 to 375; that span reads RR.

The protein belongs to the PurK/PurT family. Homodimer.

It carries out the reaction N(1)-(5-phospho-beta-D-ribosyl)glycinamide + formate + ATP = N(2)-formyl-N(1)-(5-phospho-beta-D-ribosyl)glycinamide + ADP + phosphate + H(+). It functions in the pathway purine metabolism; IMP biosynthesis via de novo pathway; N(2)-formyl-N(1)-(5-phospho-D-ribosyl)glycinamide from N(1)-(5-phospho-D-ribosyl)glycinamide (formate route): step 1/1. Functionally, involved in the de novo purine biosynthesis. Catalyzes the transfer of formate to 5-phospho-ribosyl-glycinamide (GAR), producing 5-phospho-ribosyl-N-formylglycinamide (FGAR). Formate is provided by PurU via hydrolysis of 10-formyl-tetrahydrofolate. The polypeptide is Formate-dependent phosphoribosylglycinamide formyltransferase (Bordetella pertussis (strain Tohama I / ATCC BAA-589 / NCTC 13251)).